Consider the following 530-residue polypeptide: Sulfate adenylyltransferase (530 aa).

The tract at residues 1 to 178 (MPIPAPHGGK…IQGLDYPTHY (178 aa)) is N-terminal. Residues 179 to 410 (DYIPFRKTPT…LRESNPPRSK (232 aa)) are catalytic. Q208 contributes to the sulfate binding site. Residues 208–211 (QTRN) and 304–307 (GRDH) contribute to the ATP site. Active-site residues include T209, R210, and N211. Sulfate is bound at residue R210. Sulfate is bound at residue A308. V348 is an ATP binding site. Residues 411–530 (QGFAIVIDSS…LVSQGFYQQS (120 aa)) form a required for oligomerization; adenylyl-sulfate kinase-like region.

This sequence belongs to the sulfate adenylyltransferase family. Homohexamer. Dimer of trimers.

The protein resides in the cytoplasm. It carries out the reaction sulfate + ATP + H(+) = adenosine 5'-phosphosulfate + diphosphate. The protein operates within sulfur metabolism; hydrogen sulfide biosynthesis; sulfite from sulfate: step 1/3. Catalyzes the first intracellular reaction of sulfate assimilation, forming adenosine-5'-phosphosulfate (APS) from inorganic sulfate and ATP. Plays an important role in sulfate activation as a component of the biosynthesis pathway of sulfur-containing amino acids. The chain is Sulfate adenylyltransferase from Debaryomyces hansenii (strain ATCC 36239 / CBS 767 / BCRC 21394 / JCM 1990 / NBRC 0083 / IGC 2968) (Yeast).